The primary structure comprises 168 residues: Photosystem I assembly protein Ycf3 (168 aa).

TPR repeat units follow at residues 35 to 68, 72 to 105, and 120 to 153; these read AFTYYRDGMSAQSEGNYAEALQNYYEAMRLEIDP, SYILYNIGLIHTSNGEHTKALEYYFRALERNPFL, and GEQAIQQGDSEIAEAWFDQAAEYWKQAIALTPGN.

The protein belongs to the Ycf3 family.

Its subcellular location is the plastid. It localises to the chloroplast thylakoid membrane. In terms of biological role, essential for the assembly of the photosystem I (PSI) complex. May act as a chaperone-like factor to guide the assembly of the PSI subunits. This is Photosystem I assembly protein Ycf3 from Atropa belladonna (Belladonna).